Here is a 91-residue protein sequence, read N- to C-terminus: Acylphosphatase (91 aa).

The Acylphosphatase-like domain occupies 6–91 (CMRCYISGRV…WEDYITFDVL (86 aa)). Residues arginine 21 and asparagine 39 contribute to the active site.

This sequence belongs to the acylphosphatase family.

The catalysed reaction is an acyl phosphate + H2O = a carboxylate + phosphate + H(+). This chain is Acylphosphatase (acyP), found in Legionella pneumophila (strain Lens).